The following is a 272-amino-acid chain: NAD kinase (272 aa).

Aspartate 50 acts as the Proton acceptor in catalysis. NAD(+) contacts are provided by residues 50-51 (DG), 126-127 (NE), arginine 152, aspartate 154, 165-170 (TAYNKS), and alanine 189.

Belongs to the NAD kinase family. A divalent metal cation serves as cofactor.

Its subcellular location is the cytoplasm. It carries out the reaction NAD(+) + ATP = ADP + NADP(+) + H(+). Involved in the regulation of the intracellular balance of NAD and NADP, and is a key enzyme in the biosynthesis of NADP. Catalyzes specifically the phosphorylation on 2'-hydroxyl of the adenosine moiety of NAD to yield NADP. This is NAD kinase from Streptococcus pneumoniae (strain 70585).